The primary structure comprises 353 residues: Photosystem II D2 protein (353 aa).

Thr2 is subject to N-acetylthreonine. Thr2 carries the post-translational modification Phosphothreonine. Residues 41–61 form a helical membrane-spanning segment; it reads CAYFALGGWFTGTTFVTSWYT. His118 is a chlorophyll a binding site. A helical membrane pass occupies residues 125 to 141; sequence GFMLRQFELARSVQLRP. Pheophytin a is bound by residues Gln130 and Asn143. A helical membrane pass occupies residues 153–166; sequence VFVSVFLIYPLGQS. His198 is a binding site for chlorophyll a. The helical transmembrane segment at 208–228 threads the bilayer; it reads AALLCAIHGATVENTLFEDGD. A plastoquinone is bound by residues His215 and Phe262. Position 215 (His215) interacts with Fe cation. His269 serves as a coordination point for Fe cation. A helical transmembrane segment spans residues 279–295; that stretch reads GLWMSALGVVGLALNLR.

Belongs to the reaction center PufL/M/PsbA/D family. In terms of assembly, PSII is composed of 1 copy each of membrane proteins PsbA, PsbB, PsbC, PsbD, PsbE, PsbF, PsbH, PsbI, PsbJ, PsbK, PsbL, PsbM, PsbT, PsbX, PsbY, PsbZ, Psb30/Ycf12, at least 3 peripheral proteins of the oxygen-evolving complex and a large number of cofactors. It forms dimeric complexes. Requires The D1/D2 heterodimer binds P680, chlorophylls that are the primary electron donor of PSII, and subsequent electron acceptors. It shares a non-heme iron and each subunit binds pheophytin, quinone, additional chlorophylls, carotenoids and lipids. There is also a Cl(-1) ion associated with D1 and D2, which is required for oxygen evolution. The PSII complex binds additional chlorophylls, carotenoids and specific lipids. as cofactor.

It is found in the plastid. It localises to the chloroplast thylakoid membrane. The catalysed reaction is 2 a plastoquinone + 4 hnu + 2 H2O = 2 a plastoquinol + O2. In terms of biological role, photosystem II (PSII) is a light-driven water:plastoquinone oxidoreductase that uses light energy to abstract electrons from H(2)O, generating O(2) and a proton gradient subsequently used for ATP formation. It consists of a core antenna complex that captures photons, and an electron transfer chain that converts photonic excitation into a charge separation. The D1/D2 (PsbA/PsbD) reaction center heterodimer binds P680, the primary electron donor of PSII as well as several subsequent electron acceptors. D2 is needed for assembly of a stable PSII complex. This chain is Photosystem II D2 protein, found in Coffea arabica (Arabian coffee).